We begin with the raw amino-acid sequence, 530 residues long: MDSTMMPHTIRQNTIFGKTNFAQQKLGLYQVVAPASPVCSRPGSSCSQPPTLLGNNPGVLTPTGSLSPSSFKPAIMLETEFGDNPYYPSTPPLSTSGSAVGSPKSCDILQTPLNPMFSGLDGFSGVKSGFESIESSILSWTSCDSPPMTPVYIYSQPSRVPSLSSTTSDLSNIPCPSLSPSPAPYARSVSSENDVDFCDPRNLTVSCTSNPSLSDFTLDCLIEEDSSCSEQGSIDTSVIVQPTFDFSPAIASGLPAFEDFSDFESDNELSSLVKSGGVYRPRACTGSSVVSLGHGSFIGEEDFSLDENETLRFPSPSPPSIKPVDNSHKGKRRKKSSEDTRSVEPVMNTAATAADESQTVEVEQSDRASPAPSESNSSAGADTPSAPLPAPTNRRGRKQSLTEDPSKTFVCDLCNRRFRRQEHLKRHYRSLHTQEKPFECNECGKKFSRSDNLAQHARTHASGGAIVMNLIDNVDPSAYDAGVVAPPSVDDHANYGKVLFQIASEVPGSASELSSEEASDNGKKKRKRSD.

2 C2H2-type zinc fingers span residues 409 to 437 (FVCD…QEKP) and 438 to 465 (FECN…SGGA).

The protein resides in the nucleus. Its subcellular location is the cytoplasm. Transcription factor that acts as a key downstream transcription factor in the HOG1-MAPK pathway. Plays crucial roles in the regulation of dimorphism transition, aggravated pigmentation, conidiation, microsclerotia formation and subsequent virulence towards Spodoptera litura larvae. More specifically regulates the expression of genes involved in antioxidation, pigment biosynthesis and ion transport and storage. The chain is C2H2-type transcription factor MSN2 from Metarhizium rileyi (strain RCEF 4871) (Nomuraea rileyi).